Here is a 72-residue protein sequence, read N- to C-terminus: MIFFFISNWFRSLVCCGFSRCCTYCINAITSVCDGVCMIFYIISNWFRSRDFEYRRAIRIIYIIRFLRTSFW.

This is an uncharacterized protein from Vaccinia virus (strain Copenhagen) (VACV).